Here is a 141-residue protein sequence, read N- to C-terminus: MQLTSFTDYGLRALIYMASLPQGQMTSISQVTEVYGVSRNHMVKIINQLSRAGYVTAVRGKNGGIRLGKPAQSIRVGDVVRELEPLSLVNCSSDFCHITPACRLKQALSKAVQSFLMELDNYTLADLVEENQPLYKLLLVE.

One can recognise an HTH rrf2-type domain in the interval 2–129 (QLTSFTDYGL…DNYTLADLVE (128 aa)). The H-T-H motif DNA-binding region spans 28–51 (ISQVTEVYGVSRNHMVKIINQLSR). Positions 91, 96, and 102 each coordinate [2Fe-2S] cluster.

[2Fe-2S] cluster is required as a cofactor.

Nitric oxide-sensitive repressor of genes involved in protecting the cell against nitrosative stress. May require iron for activity. This Enterobacter sp. (strain 638) protein is HTH-type transcriptional repressor NsrR.